The sequence spans 220 residues: UPF0758 protein CKO_05095 (220 aa).

The MPN domain maps to 98–220 (ALLSPEMTRE…YVSFAERGWI (123 aa)). 3 residues coordinate Zn(2+): His-169, His-171, and Asp-182. The JAMM motif motif lies at 169 to 182 (HNHPSGCAEPSKAD).

The protein belongs to the UPF0758 family. YicR subfamily.

The polypeptide is UPF0758 protein CKO_05095 (Citrobacter koseri (strain ATCC BAA-895 / CDC 4225-83 / SGSC4696)).